Consider the following 538-residue polypeptide: Nicotinate phosphoribosyltransferase (538 aa).

Residues Y21 and T210 each coordinate nicotinate. H213 is subject to Phosphohistidine. R318 is a nicotinate binding site. Residue T380 coordinates 5-phospho-alpha-D-ribose 1-diphosphate. S537 is modified (phosphoserine).

The protein belongs to the NAPRTase family. Homodimer. Mg(2+) serves as cofactor. Mn(2+) is required as a cofactor. In terms of processing, transiently phosphorylated on a His residue during the reaction cycle. Phosphorylation strongly increases the affinity for substrates and increases the rate of nicotinate D-ribonucleotide production. Dephosphorylation regenerates the low-affinity form of the enzyme, leading to product release.

Its subcellular location is the cytoplasm. The protein resides in the cytosol. It catalyses the reaction nicotinate + 5-phospho-alpha-D-ribose 1-diphosphate + ATP + H2O = nicotinate beta-D-ribonucleotide + ADP + phosphate + diphosphate. Its pathway is cofactor biosynthesis; NAD(+) biosynthesis; nicotinate D-ribonucleotide from nicotinate: step 1/1. Its function is as follows. Catalyzes the first step in the biosynthesis of NAD from nicotinic acid, the ATP-dependent synthesis of beta-nicotinate D-ribonucleotide from nicotinate and 5-phospho-D-ribose 1-phosphate. Helps prevent cellular oxidative stress via its role in NAD biosynthesis. In Homo sapiens (Human), this protein is Nicotinate phosphoribosyltransferase (NAPRT).